We begin with the raw amino-acid sequence, 582 residues long: Vesicular glutamate transporter 2 (582 aa).

Residues 1–71 (MESVKQRILT…CTCFGLPRRY (71 aa)) lie on the Cytoplasmic side of the membrane. A helical membrane pass occupies residues 72 to 92 (IIAIMSGLGFCISFGIRCNLG). The Vesicular segment spans residues 93 to 125 (VAIVDMVNNSTIHRGGKVIKEKAKFNWDPETVG). Asn100 and Asn101 each carry an N-linked (GlcNAc...) asparagine glycan. The chain crosses the membrane as a helical span at residues 126 to 146 (MIHGSFFWGYIITQIPGGYIA). At 147–148 (SR) the chain is on the cytoplasmic side. A helical membrane pass occupies residues 149–169 (LAANRVFGAAILLTSTLNMLI). Topologically, residues 170 to 177 (PSAARVHY) are vesicular. The helical transmembrane segment at 178-198 (GCVIFVRILQGLVEGVTYPAC) threads the bilayer. Residues 199–216 (HGIWSKWAPPLERSRLAT) are Cytoplasmic-facing. A helical membrane pass occupies residues 217–237 (TSFCGSYAGAVIAMPLAGILV). The Vesicular segment spans residues 238–244 (QYTGWSS). Residues 245–265 (VFYVYGSFGMIWYMFWLLVSY) traverse the membrane as a helical segment. Topologically, residues 266 to 310 (ESPAKHPTITDEERRYIEESIGESANLLGAMEKFKTPWRKFFTSM) are cytoplasmic. A helical membrane pass occupies residues 311–331 (PVYAIIVANFCRSWTFYLLLI). Residues 332-349 (SQPAYFEEVFGFEISKVG) lie on the Vesicular side of the membrane. A helical membrane pass occupies residues 350-370 (MLSAVPHLVMTIIVPIGGQIA). Residues 371–386 (DFLRSKQILSTTTVRK) are Cytoplasmic-facing. The chain crosses the membrane as a helical span at residues 387 to 407 (IMNCGGFGMEATLLLVVGYSH). The Vesicular segment spans residues 408–409 (TR). The helical transmembrane segment at 410 to 430 (GVAISFLVLAVGFSGFAISGF) threads the bilayer. Over 431–443 (NVNHLDIAPRYAS) the chain is Cytoplasmic. The chain crosses the membrane as a helical span at residues 444-464 (ILMGISNGVGTLSGMVCPIIV). Residues 465 to 477 (GAMTKNKSREEWQ) lie on the Vesicular side of the membrane. N-linked (GlcNAc...) asparagine glycosylation is present at Asn470. A helical membrane pass occupies residues 478-498 (YVFLIAALVHYGGVIFYAIFA). Over 499–582 (SGEKQPWADP…YNYKDRDDYS (84 aa)) the chain is Cytoplasmic.

This sequence belongs to the major facilitator superfamily. Sodium/anion cotransporter family. VGLUT subfamily.

The protein localises to the cytoplasmic vesicle. Its subcellular location is the secretory vesicle. It localises to the synaptic vesicle membrane. The protein resides in the synapse. It is found in the synaptosome. The protein localises to the cell membrane. The enzyme catalyses L-glutamate(out) = L-glutamate(in). The catalysed reaction is 3 Na(+)(out) + phosphate(out) = 3 Na(+)(in) + phosphate(in). It carries out the reaction phosphate(in) = phosphate(out). It catalyses the reaction K(+)(in) + H(+)(out) = K(+)(out) + H(+)(in). The enzyme catalyses chloride(in) = chloride(out). Its activity is regulated as follows. Chloride channel activity is allosterically activated by lumenal H(+) and Cl(-) leading to synaptic vesicles acidification. The L-glutamate transport activity is allosterically activated by lumenal H(+) and Cl(-). The allosteric requirement for H(+) efficiently prevents non-vesicular efflux across the plasma membrane. The L-glutamate uniporter activity exhibits a biphasic dependence on chloride concentration. Its function is as follows. Multifunctional transporter that transports L-glutamate as well as multiple ions such as chloride, proton, potassium, sodium and phosphate. At the synaptic vesicle membrane, mainly functions as a uniporter which transports preferentially L-glutamate but also, phosphate from the cytoplasm into synaptic vesicles at presynaptic nerve terminals of excitatory neural cells. The L-glutamate or phosphate uniporter activity is electrogenic and is driven by the proton electrochemical gradient, mainly by the electrical gradient established by the vacuolar H(+)-ATPase across the synaptic vesicle membrane. In addition, functions as a chloride channel that allows a chloride permeation through the synaptic vesicle membrane therefore affects the proton electrochemical gradient and promotes synaptic vesicles acidification. Moreover, functions as a vesicular K(+)/H(+) antiport allowing to maintain the electrical gradient and to decrease chemical gradient and therefore sustain vesicular L-glutamate uptake. The vesicular H(+)/H(+) antiport activity is electroneutral. At the plasma membrane, following exocytosis, functions as a symporter of Na(+) and phosphate from the extracellular space to the cytoplasm allowing synaptic phosphate homeostasis regulation. The symporter activity is driven by an inside negative membrane potential and is electrogenic. Also involved in the regulation of retinal hyaloid vessel regression during postnatal development. May also play a role in the endocrine L-glutamatergic system of other tissues such as pineal gland and pancreas. This is Vesicular glutamate transporter 2 from Bos taurus (Bovine).